Reading from the N-terminus, the 369-residue chain is Maltose/maltodextrin import ATP-binding protein MalK (369 aa).

The ABC transporter domain maps to 4-234 (VTLRNVCKSY…PKNRFVAGFI (231 aa)). ATP is bound at residue 36 to 43 (GPSGCGKS).

It belongs to the ABC transporter superfamily. Maltooligosaccharide importer (TC 3.A.1.1.1) family. As to quaternary structure, the complex is composed of two ATP-binding proteins (MalK), two transmembrane proteins (MalG and MalK) and a solute-binding protein (MalE).

It is found in the cell inner membrane. The enzyme catalyses D-maltose(out) + ATP + H2O = D-maltose(in) + ADP + phosphate + H(+). In terms of biological role, part of the ABC transporter complex MalEFGK involved in maltose/maltodextrin import. Responsible for energy coupling to the transport system. This Aliivibrio fischeri (strain ATCC 700601 / ES114) (Vibrio fischeri) protein is Maltose/maltodextrin import ATP-binding protein MalK.